Here is a 289-residue protein sequence, read N- to C-terminus: Energy-coupling factor transporter ATP-binding protein EcfA2 (289 aa).

The region spanning 3–246 is the ABC transporter domain; it reads IEIKDVEHRY…KDDIAALGLD (244 aa). ATP is bound at residue 40 to 47; the sequence is GHTGSGKS.

It belongs to the ABC transporter superfamily. Energy-coupling factor EcfA family. In terms of assembly, forms a stable energy-coupling factor (ECF) transporter complex composed of 2 membrane-embedded substrate-binding proteins (S component), 2 ATP-binding proteins (A component) and 2 transmembrane proteins (T component).

It is found in the cell membrane. ATP-binding (A) component of a common energy-coupling factor (ECF) ABC-transporter complex. Unlike classic ABC transporters this ECF transporter provides the energy necessary to transport a number of different substrates. This chain is Energy-coupling factor transporter ATP-binding protein EcfA2, found in Bacillus licheniformis (strain ATCC 14580 / DSM 13 / JCM 2505 / CCUG 7422 / NBRC 12200 / NCIMB 9375 / NCTC 10341 / NRRL NRS-1264 / Gibson 46).